The sequence spans 326 residues: tRNA(Ile)-lysidine synthase (326 aa).

Position 25–30 (Ser25–Ser30) interacts with ATP.

This sequence belongs to the tRNA(Ile)-lysidine synthase family.

Its subcellular location is the cytoplasm. The enzyme catalyses cytidine(34) in tRNA(Ile2) + L-lysine + ATP = lysidine(34) in tRNA(Ile2) + AMP + diphosphate + H(+). Its function is as follows. Ligates lysine onto the cytidine present at position 34 of the AUA codon-specific tRNA(Ile) that contains the anticodon CAU, in an ATP-dependent manner. Cytidine is converted to lysidine, thus changing the amino acid specificity of the tRNA from methionine to isoleucine. The polypeptide is tRNA(Ile)-lysidine synthase (Prochlorococcus marinus (strain NATL1A)).